The chain runs to 369 residues: GDSL esterase/lipase At5g41890 (369 aa).

The active-site Nucleophile is the serine 32. Residues aspartate 334 and histidine 337 contribute to the active site.

The protein belongs to the 'GDSL' lipolytic enzyme family.

In Arabidopsis thaliana (Mouse-ear cress), this protein is GDSL esterase/lipase At5g41890.